The chain runs to 72 residues: High-potential iron-sulfur protein isozyme 1 (72 aa).

At Ala1 the chain carries N-carbamoylalanine; partial. Residues Cys34, Cys37, Cys51, and Cys65 each contribute to the [4Fe-4S] cluster site.

This sequence belongs to the high-potential iron-sulfur protein (HiPIP) family. Homodimer.

Functionally, specific class of high-redox-potential 4Fe-4S ferredoxins. Functions in anaerobic electron transport in most purple and in some other photosynthetic bacteria and in at least one genus (Paracoccus) of halophilic, denitrifying bacteria. This is High-potential iron-sulfur protein isozyme 1 from Ectothiorhodospira mobilis.